The following is a 324-amino-acid chain: Phosphomevalonate decarboxylase (324 aa).

Belongs to the phosphomevalonate decarboxylase family.

It carries out the reaction (R)-5-phosphomevalonate + ATP = isopentenyl phosphate + ADP + phosphate + CO2. Its activity is regulated as follows. Is strongly inhibited by 6-fluoromevalonate monophosphate but shows negligible inhibition by 6-fluoromevalonate diphosphate (a potent inhibitor of the classical mevalonate pathway). Functionally, catalyzes the decarboxylation of mevalonate 5-phosphate (MVAP) to isopentenyl phosphate (IP). Functions in an alternate mevalonate (MVA) pathway leading to isopentenyl diphosphate (IPP), a key precursor for the biosynthesis of isoprenoid compounds such as archaeal membrane lipids. The polypeptide is Phosphomevalonate decarboxylase (mvaD) (Haloferax volcanii (strain ATCC 29605 / DSM 3757 / JCM 8879 / NBRC 14742 / NCIMB 2012 / VKM B-1768 / DS2) (Halobacterium volcanii)).